A 400-amino-acid polypeptide reads, in one-letter code: Subtilisin-like protease 1 (400 aa).

The signal sequence occupies residues 1–20; sequence MKFSQSLIALAACFLPLIAA. Positions 21-119 are excised as a propeptide; sequence APVEAQHAKI…IEMDGKVQAN (99 aa). An Inhibitor I9 domain is found at 42–117; it reads SYIVVFNKGV…AWIEMDGKVQ (76 aa). Asn-82 carries an N-linked (GlcNAc...) asparagine glycan. Positions 128–400 constitute a Peptidase S8 domain; it reads TWGLGRISHK…NLIAYNGNGA (273 aa). Active-site charge relay system residues include Asp-160, His-192, and Ser-345.

Belongs to the peptidase S8 family.

Its subcellular location is the secreted. In terms of biological role, major secreted subtilisin-like serine endopeptidase. Mediates the degradation of collagen, the major structural protein in the mammalian host. Degrades the nonhelical regions of collagen that function in the cross-linking of the helical components. May function as virulence factor involved in epidermal wing necrosis observed in white nose syndrome (WNS) in bats. This Pseudogymnoascus destructans (strain ATCC MYA-4855 / 20631-21) (Bat white-nose syndrome fungus) protein is Subtilisin-like protease 1.